Reading from the N-terminus, the 316-residue chain is Probable porphobilinogen deaminase (316 aa).

C234 carries the post-translational modification S-(dipyrrolylmethanemethyl)cysteine.

It belongs to the HMBS family. Dipyrromethane is required as a cofactor.

The catalysed reaction is 4 porphobilinogen + H2O = hydroxymethylbilane + 4 NH4(+). The protein operates within porphyrin-containing compound metabolism; protoporphyrin-IX biosynthesis; coproporphyrinogen-III from 5-aminolevulinate: step 2/4. Tetrapolymerization of the monopyrrole PBG into the hydroxymethylbilane pre-uroporphyrinogen in several discrete steps. The protein is Probable porphobilinogen deaminase of Methanosarcina barkeri (strain Fusaro / DSM 804).